The chain runs to 205 residues: Holliday junction branch migration complex subunit RuvA (205 aa).

The tract at residues 1-65 (MIAKLKGILD…EDRIHLFGFL (65 aa)) is domain I. The domain II stretch occupies residues 66–144 (DNTEKVAFNM…NINTIANNTS (79 aa)). The tract at residues 145 to 153 (LAILSTDSN) is flexible linker. The tract at residues 154 to 205 (THDNILSDAITALIALGISRAEATQILSDIYALFPSISVNELVRTALQRRAK) is domain III.

Belongs to the RuvA family. Homotetramer. Forms an RuvA(8)-RuvB(12)-Holliday junction (HJ) complex. HJ DNA is sandwiched between 2 RuvA tetramers; dsDNA enters through RuvA and exits via RuvB. An RuvB hexamer assembles on each DNA strand where it exits the tetramer. Each RuvB hexamer is contacted by two RuvA subunits (via domain III) on 2 adjacent RuvB subunits; this complex drives branch migration. In the full resolvosome a probable DNA-RuvA(4)-RuvB(12)-RuvC(2) complex forms which resolves the HJ.

The protein resides in the cytoplasm. In terms of biological role, the RuvA-RuvB-RuvC complex processes Holliday junction (HJ) DNA during genetic recombination and DNA repair, while the RuvA-RuvB complex plays an important role in the rescue of blocked DNA replication forks via replication fork reversal (RFR). RuvA specifically binds to HJ cruciform DNA, conferring on it an open structure. The RuvB hexamer acts as an ATP-dependent pump, pulling dsDNA into and through the RuvAB complex. HJ branch migration allows RuvC to scan DNA until it finds its consensus sequence, where it cleaves and resolves the cruciform DNA. The polypeptide is Holliday junction branch migration complex subunit RuvA (Orientia tsutsugamushi (strain Boryong) (Rickettsia tsutsugamushi)).